We begin with the raw amino-acid sequence, 91 residues long: UPF0358 protein SSP1677 (91 aa).

It belongs to the UPF0358 family.

The sequence is that of UPF0358 protein SSP1677 from Staphylococcus saprophyticus subsp. saprophyticus (strain ATCC 15305 / DSM 20229 / NCIMB 8711 / NCTC 7292 / S-41).